A 603-amino-acid chain; its full sequence is Serine/threonine-protein kinase PLK1 (603 aa).

K19 participates in a covalent cross-link: Glycyl lysine isopeptide (Lys-Gly) (interchain with G-Cter in ubiquitin). Residues 53–305 (YVRGRFLGKG…IHELLNDEFF (253 aa)) form the Protein kinase domain. ATP is bound by residues 59 to 67 (LGKGGFAKC) and K82. Position 103 is a phosphoserine (S103). E131 is a binding site for ATP. Position 137 is a phosphoserine (S137). The active-site Proton acceptor is D176. ATP is bound by residues 178–181 (KLGN) and D194. The interval 194–221 (DFGLATKVEYEGERKKTLCGTPNYIAPE) is activation loop. At T210 the chain carries Phosphothreonine; by AURKA. Phosphothreonine is present on T214. Residues S269 and S335 each carry the phosphoserine; by autocatalysis modification. The short motif at 337–340 (RKPL) is the D-box that targets the protein for proteasomal degradation in anaphase element. A Glycyl lysine isopeptide (Lys-Gly) (interchain with G-Cter in SUMO2) cross-link involves residue K338. 2 positions are modified to phosphoserine: S375 and S450. The POLO box 1 domain maps to 410–488 (WVSKWVDYSD…LNYFRNYMSE (79 aa)). Residue K492 forms a Glycyl lysine isopeptide (Lys-Gly) (interchain with G-Cter in ubiquitin) linkage. Residues 493–507 (AGANITPREGDELAR) are linker. Position 498 is a phosphothreonine (T498). Residues 510–592 (YLRTWFRTRS…ARTMVDKLLS (83 aa)) form the POLO box 2 domain. Positions 538-540 (HTK) are important for interaction with phosphorylated proteins.

Belongs to the protein kinase superfamily. Ser/Thr protein kinase family. CDC5/Polo subfamily. As to quaternary structure, interacts with CEP170 and EVI5. Interacts and phosphorylates ERCC6L. Interacts with FAM29A. Interacts with SLX4/BTBD12 and TTDN1. Interacts with BUB1B. Interacts (via POLO-box domain) with the phosphorylated form of BUB1, CENPU and CDC25C. Interacts with isoform 3 of SGO1. Interacts with BORA, KIF2A and AURKA. Interacts with TOPORS and CYLD. Interacts with ECT2; the interaction is stimulated upon phosphorylation of ECT2 on 'Thr-444'. Interacts with PRC1. Interacts with KIF20A/MKLP2 (when phosphorylated), leading to the recruitment at the central spindle. Interacts (via POLO box domains) with PPP1R12A/MYPT1 (when previously phosphorylated by CDK1). Part of an astrin (SPAG5)-kinastrin (SKAP) complex containing KNSTRN, SPAG5, PLK1, DYNLL1 and SGO2A. Interacts with BIRC6/bruce. Interacts with CDK1-phosphorylated DCTN6 during mitotic prometaphase; the interaction facilitates recruitment to kinetochores. Interacts with CDK1-phosphorylated FRY; this interaction occurs in mitotic cells, but not in interphase cells. FRY interaction facilitates AURKA-mediated PLK1 phosphorylation. Interacts with CEP68; the interaction phosphorylates CEP68. Interacts (via POLO-box domain) with DCTN1. Interacts with CEP20 in later G1, S, G2 and M phases of the cell cycle; this interaction recruits PLK1 to centrosomes, a step required for S phase progression. Interacts with HSF1; this interaction increases upon heat shock but does not modulate neither HSF1 homotrimerization nor DNA-binding activities. Interacts with HNRNPU; this interaction induces phosphorylation of HNRNPU in mitosis. Interacts (via its N-terminus) with RIOK2. Interacts with KLHL22. Interacts (via POLO box domains) with NEDD9/HEF1 (via C-terminus). Interacts (via RVxF motif) with FIRRM; regulates PLK1 kinase activity. Interacts with SKA3; the interaction promotes the stability of PLK1. Interacts with the MTMR3:MTMR4 heterooligomer; brings CEP55 and PLK1 together during early mitosis, regulating the phosphorylation of CEP55 by PLK1 and its recruitment to the midbody where it can mediate cell abscission. Catalytic activity is enhanced by phosphorylation of Thr-210. Phosphorylation at Thr-210 is first detected on centrosomes in the G2 phase of the cell cycle, peaks in prometaphase and gradually disappears from centrosomes during anaphase. Dephosphorylation at Thr-210 at centrosomes is probably mediated by protein phosphatase 1C (PP1C), via interaction with PPP1R12A/MYPT1. Autophosphorylation and phosphorylation of Ser-137 may not be significant for the activation of PLK1 during mitosis, but may enhance catalytic activity during recovery after DNA damage checkpoint. Phosphorylated in vitro by STK10. Post-translationally, ubiquitinated by the anaphase promoting complex/cyclosome (APC/C) in anaphase and following DNA damage, leading to its degradation by the proteasome. Ubiquitination is mediated via its interaction with FZR1/CDH1. Ubiquitination and subsequent degradation prevents entry into mitosis and is essential to maintain an efficient G2 DNA damage checkpoint. Monoubiquitination at Lys-492 by the BCR(KLHL22) ubiquitin ligase complex does not lead to degradation: it promotes PLK1 dissociation from phosphoreceptor proteins and subsequent removal from kinetochores, allowing silencing of the spindle assembly checkpoint (SAC) and chromosome segregation. In terms of tissue distribution, newborn and adult spleen, fetal and newborn kidney, liver, brain, thymus and adult bone marrow, thymus, ovary and testes.

Its subcellular location is the nucleus. It is found in the chromosome. The protein resides in the centromere. The protein localises to the kinetochore. It localises to the cytoplasm. Its subcellular location is the cytoskeleton. It is found in the microtubule organizing center. The protein resides in the centrosome. The protein localises to the spindle. It localises to the midbody. It catalyses the reaction L-seryl-[protein] + ATP = O-phospho-L-seryl-[protein] + ADP + H(+). The catalysed reaction is L-threonyl-[protein] + ATP = O-phospho-L-threonyl-[protein] + ADP + H(+). Activated by phosphorylation of Thr-210 by AURKA; phosphorylation by AURKA is enhanced by BORA. Once activated, activity is stimulated by binding target proteins. Binding of target proteins has no effect on the non-activated kinase. Several inhibitors targeting PLKs are currently in development and are under investigation in a growing number of clinical trials, such as BI 2536, an ATP-competitive PLK1 inhibitor or BI 6727, a dihydropteridinone that specifically inhibits the catalytic activity of PLK1. Its function is as follows. Serine/threonine-protein kinase that performs several important functions throughout M phase of the cell cycle, including the regulation of centrosome maturation and spindle assembly, the removal of cohesins from chromosome arms, the inactivation of anaphase-promoting complex/cyclosome (APC/C) inhibitors, and the regulation of mitotic exit and cytokinesis. Polo-like kinase proteins act by binding and phosphorylating proteins that are already phosphorylated on a specific motif recognized by the POLO box domains. Phosphorylates BORA, BUB1B/BUBR1, CCNB1, CDC25C, CEP55, ECT2, ERCC6L, FBXO5/EMI1, FOXM1, KIF20A/MKLP2, CENPU, NEDD1, NINL, NPM1, NUDC, PKMYT1/MYT1, KIZ, MRE11, PPP1R12A/MYPT1, POLQ, PRC1, RACGAP1/CYK4, RAD51, RHNO1, SGO1, STAG2/SA2, TEX14, TOPORS, p73/TP73, TPT1, WEE1 and HNRNPU. Plays a key role in centrosome functions and the assembly of bipolar spindles by phosphorylating KIZ, NEDD1 and NINL. NEDD1 phosphorylation promotes subsequent targeting of the gamma-tubulin ring complex (gTuRC) to the centrosome, an important step for spindle formation. Phosphorylation of NINL component of the centrosome leads to NINL dissociation from other centrosomal proteins. Involved in mitosis exit and cytokinesis by phosphorylating CEP55, ECT2, KIF20A/MKLP2, CENPU, PRC1 and RACGAP1. Recruited at the central spindle by phosphorylating and docking PRC1 and KIF20A/MKLP2; creates its own docking sites on PRC1 and KIF20A/MKLP2 by mediating phosphorylation of sites subsequently recognized by the POLO box domains. Phosphorylates RACGAP1, thereby creating a docking site for the Rho GTP exchange factor ECT2 that is essential for the cleavage furrow formation. Promotes the central spindle recruitment of ECT2. Plays a central role in G2/M transition of mitotic cell cycle by phosphorylating CCNB1, CDC25C, FOXM1, CENPU, PKMYT1/MYT1, PPP1R12A/MYPT1 and WEE1. Part of a regulatory circuit that promotes the activation of CDK1 by phosphorylating the positive regulator CDC25C and inhibiting the negative regulators WEE1 and PKMYT1/MYT1. Also acts by mediating phosphorylation of cyclin-B1 (CCNB1) on centrosomes in prophase. Phosphorylates FOXM1, a key mitotic transcription regulator, leading to enhance FOXM1 transcriptional activity. Involved in kinetochore functions and sister chromatid cohesion by phosphorylating BUB1B/BUBR1, FBXO5/EMI1 and STAG2/SA2. PLK1 is high on non-attached kinetochores suggesting a role of PLK1 in kinetochore attachment or in spindle assembly checkpoint (SAC) regulation. Required for kinetochore localization of BUB1B. Regulates the dissociation of cohesin from chromosomes by phosphorylating cohesin subunits such as STAG2/SA2. Phosphorylates SGO1: required for spindle pole localization of isoform 3 of SGO1 and plays a role in regulating its centriole cohesion function. Mediates phosphorylation of FBXO5/EMI1, a negative regulator of the APC/C complex during prophase, leading to FBXO5/EMI1 ubiquitination and degradation by the proteasome. Acts as a negative regulator of p53 family members: phosphorylates TOPORS, leading to inhibit the sumoylation of p53/TP53 and simultaneously enhance the ubiquitination and subsequent degradation of p53/TP53. Phosphorylates the transactivation domain of the transcription factor p73/TP73, leading to inhibit p73/TP73-mediated transcriptional activation and pro-apoptotic functions. Phosphorylates BORA, and thereby promotes the degradation of BORA. Contributes to the regulation of AURKA function. Also required for recovery after DNA damage checkpoint and entry into mitosis. Phosphorylates MISP, leading to stabilization of cortical and astral microtubule attachments required for proper spindle positioning. Together with MEIKIN, acts as a regulator of kinetochore function during meiosis I: required both for mono-orientation of kinetochores on sister chromosomes and protection of centromeric cohesin from separase-mediated cleavage. Phosphorylates CEP68 and is required for its degradation. Regulates nuclear envelope breakdown during prophase by phosphorylating DCTN1 resulting in its localization in the nuclear envelope. Phosphorylates the heat shock transcription factor HSF1, promoting HSF1 nuclear translocation upon heat shock. Phosphorylates HSF1 also in the early mitotic period; this phosphorylation regulates HSF1 localization to the spindle pole, the recruitment of the SCF(BTRC) ubiquitin ligase complex induicing HSF1 degradation, and hence mitotic progression. Regulates mitotic progression by phosphorylating RIOK2. Through the phosphorylation of DZIP1 regulates the localization during mitosis of the BBSome, a ciliary protein complex involved in cilium biogenesis. Regulates DNA repair during mitosis by mediating phosphorylation of POLQ and RHNO1, thereby promoting POLQ recruitment to DNA damage sites. Phosphorylates ATXN10 which may play a role in the regulation of cytokinesis and may stimulate the proteasome-mediated degradation of ATXN10. This chain is Serine/threonine-protein kinase PLK1 (Plk1), found in Mus musculus (Mouse).